The chain runs to 307 residues: D-alanine--D-alanine ligase (307 aa).

The 201-residue stretch at 101–301 folds into the ATP-grasp domain; sequence KTVMRAAGVS…FGELVRWMVE (201 aa). ATP is bound at residue 127 to 182; the sequence is PLTPPYVVKPIAEGSSMGVIIVRDERSHPPQILASDEWVYGEEVLAETYVAGRELT. Aspartate 251, glutamate 268, and asparagine 270 together coordinate Mg(2+).

The protein belongs to the D-alanine--D-alanine ligase family. Mg(2+) is required as a cofactor. The cofactor is Mn(2+).

Its subcellular location is the cytoplasm. It catalyses the reaction 2 D-alanine + ATP = D-alanyl-D-alanine + ADP + phosphate + H(+). It functions in the pathway cell wall biogenesis; peptidoglycan biosynthesis. In terms of biological role, cell wall formation. This chain is D-alanine--D-alanine ligase, found in Methylorubrum extorquens (strain PA1) (Methylobacterium extorquens).